We begin with the raw amino-acid sequence, 463 residues long: uncharacterized protein (463 aa).

The protein belongs to the UbiD family.

This is an uncharacterized protein from Rhodospirillum rubrum.